The sequence spans 603 residues: NADPH-dependent diflavin oxidoreductase 1 (603 aa).

Residues 10-155 enclose the Flavodoxin-like domain; that stretch reads VTILYGSETG…YYSEWETNLL (146 aa). FMN contacts are provided by residues 16 to 21, 64 to 67, 102 to 111, and Glu137; these read SETGNA, STTG, and IGDSSYPKFN. Positions 209-451 constitute an FAD-binding FR-type domain; the sequence is TNLLLGSVKA…HKSNLKFELP (243 aa). Residues Arg359, 390 to 393, and 422 to 425 each bind FAD; these read RLFS and GLCT. Residues Thr465 and 521–522 contribute to the NADP(+) site; that span reads SR. Trp603 serves as a coordination point for FAD.

The protein belongs to the NADPH-dependent diflavin oxidoreductase NDOR1 family. This sequence in the N-terminal section; belongs to the flavodoxin family. In the C-terminal section; belongs to the flavoprotein pyridine nucleotide cytochrome reductase family. As to quaternary structure, interacts with DRE2; as part of the cytosolic iron-sulfur (Fe-S) protein assembly (CIA) machinery. FAD is required as a cofactor. It depends on FMN as a cofactor.

The protein resides in the cytoplasm. It is found in the mitochondrion. It catalyses the reaction 2 oxidized [2Fe-2S]-[protein] + NADPH = 2 reduced [2Fe-2S]-[protein] + NADP(+) + H(+). NADPH-dependent reductase which is a central component of the cytosolic iron-sulfur (Fe-S) protein assembly (CIA) machinery. Transfers electrons from NADPH via its FAD and FMN prosthetic groups to the [2Fe-2S] cluster of DRE2, another key component of the CIA machinery. In turn, this reduced cluster provides electrons for assembly of cytosolic iron-sulfur cluster proteins. Positively controls H(2)O(2)-induced cell death. This Debaryomyces hansenii (strain ATCC 36239 / CBS 767 / BCRC 21394 / JCM 1990 / NBRC 0083 / IGC 2968) (Yeast) protein is NADPH-dependent diflavin oxidoreductase 1.